Consider the following 345-residue polypeptide: Putative mediator of RNA polymerase II transcription subunit 7 (345 aa).

Low complexity-rich tracts occupy residues 1-27 (MNTS…TPQQ) and 88-126 (NNNN…NNNN). Disordered regions lie at residues 1–130 (MNTS…KATT) and 292–315 (TPLP…NNSQ).

It belongs to the Mediator complex subunit 7 family. As to quaternary structure, component of the Mediator complex.

The protein localises to the nucleus. In terms of biological role, component of the Mediator complex, a coactivator involved in the regulated transcription of nearly all RNA polymerase II-dependent genes. Mediator functions as a bridge to convey information from gene-specific regulatory proteins to the basal RNA polymerase II transcription machinery. Mediator is recruited to promoters by direct interactions with regulatory proteins and serves as a scaffold for the assembly of a functional preinitiation complex with RNA polymerase II and the general transcription factors. The protein is Putative mediator of RNA polymerase II transcription subunit 7 (med7) of Dictyostelium discoideum (Social amoeba).